A 271-amino-acid chain; its full sequence is Sulfur carrier protein FdhD (271 aa).

Cys-114 serves as the catalytic Cysteine persulfide intermediate.

It belongs to the FdhD family.

The protein localises to the cytoplasm. Required for formate dehydrogenase (FDH) activity. Acts as a sulfur carrier protein that transfers sulfur from IscS to the molybdenum cofactor prior to its insertion into FDH. This Agrobacterium fabrum (strain C58 / ATCC 33970) (Agrobacterium tumefaciens (strain C58)) protein is Sulfur carrier protein FdhD.